A 134-amino-acid chain; its full sequence is Ribosome-binding factor A (134 aa).

The protein belongs to the RbfA family. Monomer. Binds 30S ribosomal subunits, but not 50S ribosomal subunits or 70S ribosomes.

It localises to the cytoplasm. One of several proteins that assist in the late maturation steps of the functional core of the 30S ribosomal subunit. Associates with free 30S ribosomal subunits (but not with 30S subunits that are part of 70S ribosomes or polysomes). Required for efficient processing of 16S rRNA. May interact with the 5'-terminal helix region of 16S rRNA. In Rhizobium johnstonii (strain DSM 114642 / LMG 32736 / 3841) (Rhizobium leguminosarum bv. viciae), this protein is Ribosome-binding factor A.